The following is a 644-amino-acid chain: Chaperone protein HtpG (644 aa).

Residues 1–352 (MNARVEQLEF…AQDMSLNVSR (352 aa)) form an a; substrate-binding region. Positions 353-566 (EILQQDRQIK…AFGITPALAR (214 aa)) are b. The c stretch occupies residues 567–644 (LYRASGQDIP…ILADRLARTL (78 aa)).

This sequence belongs to the heat shock protein 90 family. In terms of assembly, homodimer.

The protein resides in the cytoplasm. Functionally, molecular chaperone. Has ATPase activity. The protein is Chaperone protein HtpG of Mycolicibacterium paratuberculosis (strain ATCC BAA-968 / K-10) (Mycobacterium paratuberculosis).